The following is a 458-amino-acid chain: Argininosuccinate lyase (458 aa).

Belongs to the lyase 1 family. Argininosuccinate lyase subfamily.

It localises to the cytoplasm. The enzyme catalyses 2-(N(omega)-L-arginino)succinate = fumarate + L-arginine. It functions in the pathway amino-acid biosynthesis; L-arginine biosynthesis; L-arginine from L-ornithine and carbamoyl phosphate: step 3/3. This Actinobacillus pleuropneumoniae serotype 3 (strain JL03) protein is Argininosuccinate lyase.